The sequence spans 284 residues: 2-dehydro-3-deoxyphosphooctonate aldolase (284 aa).

Belongs to the KdsA family.

It is found in the cytoplasm. It carries out the reaction D-arabinose 5-phosphate + phosphoenolpyruvate + H2O = 3-deoxy-alpha-D-manno-2-octulosonate-8-phosphate + phosphate. It participates in carbohydrate biosynthesis; 3-deoxy-D-manno-octulosonate biosynthesis; 3-deoxy-D-manno-octulosonate from D-ribulose 5-phosphate: step 2/3. Its pathway is bacterial outer membrane biogenesis; lipopolysaccharide biosynthesis. This Shigella boydii serotype 18 (strain CDC 3083-94 / BS512) protein is 2-dehydro-3-deoxyphosphooctonate aldolase.